Here is a 1070-residue protein sequence, read N- to C-terminus: DNA-directed RNA polymerase subunit beta (1070 aa).

Belongs to the RNA polymerase beta chain family. As to quaternary structure, in plastids the minimal PEP RNA polymerase catalytic core is composed of four subunits: alpha, beta, beta', and beta''. When a (nuclear-encoded) sigma factor is associated with the core the holoenzyme is formed, which can initiate transcription.

The protein resides in the plastid. It localises to the chloroplast. The enzyme catalyses RNA(n) + a ribonucleoside 5'-triphosphate = RNA(n+1) + diphosphate. In terms of biological role, DNA-dependent RNA polymerase catalyzes the transcription of DNA into RNA using the four ribonucleoside triphosphates as substrates. The sequence is that of DNA-directed RNA polymerase subunit beta from Daucus carota (Wild carrot).